A 539-amino-acid polypeptide reads, in one-letter code: Alpha-copaene synthase (539 aa).

The Mg(2+) site is built by Asp290 and Asp294. Residues Asp290, Asp294, and Arg432 each coordinate substrate. Positions 290 to 294 match the DDXXD motif motif; the sequence is DDTFD.

It belongs to the terpene synthase family. In terms of assembly, monomer. Mg(2+) is required as a cofactor. It depends on Mn(2+) as a cofactor.

It is found in the cytoplasm. It catalyses the reaction (2E,6E)-farnesyl diphosphate = alpha-copaene + diphosphate. The enzyme catalyses (2E,6E)-farnesyl diphosphate = (+)-germacrene D + diphosphate. The catalysed reaction is (2E,6E)-farnesyl diphosphate = (-)-(E)-beta-caryophyllene + diphosphate. It carries out the reaction (2E,6E)-farnesyl diphosphate = delta-cadinene + diphosphate. It participates in secondary metabolite biosynthesis; terpenoid biosynthesis. Its function is as follows. Converts farnesyl diphosphate to the bicyclic olefins alpha-copaene, (E)-beta-caryophyllene, and to the macrocyclic sesquiterpene germacrene D. Also mediates the biosynthesis of minor sesquiterpene hydrocarbons including delta-cadinene. Involved in indirect defense by producing volatile signals attracting natural enemies of herbivores. The sequence is that of Alpha-copaene synthase from Zea mays (Maize).